We begin with the raw amino-acid sequence, 275 residues long: Lysosome-associated membrane glycoprotein 5 (275 aa).

A signal peptide spans 1–18 (MEFQLLLLCSVWALGVCA). Residues 19–228 (EQEVENLSGL…VTDQREQLEQ (210 aa)) are Extracellular-facing. N24 and N42 each carry an N-linked (GlcNAc...) asparagine glycan. Residues 229 to 249 (TLPLVLGLILGLIIVITISVY) traverse the membrane as a helical segment. The Cytoplasmic portion of the chain corresponds to 250-275 (HFHLKLNAAHTQQPTLPRDRSLYKNM).

It belongs to the LAMP family. Glycosylated.

The protein resides in the cytoplasmic vesicle membrane. The protein localises to the cell membrane. Its subcellular location is the cell projection. It is found in the dendrite. It localises to the cytoplasmic vesicle. The protein resides in the secretory vesicle. The protein localises to the synaptic vesicle membrane. Its subcellular location is the growth cone membrane. It is found in the early endosome membrane. It localises to the recycling endosome. The protein resides in the endoplasmic reticulum-Golgi intermediate compartment membrane. The protein localises to the endosome membrane. Plays a role in short-term synaptic plasticity in a subset of GABAergic neurons in the brain. The sequence is that of Lysosome-associated membrane glycoprotein 5 (lamp5) from Danio rerio (Zebrafish).